Consider the following 290-residue polypeptide: uncharacterized protein (290 aa).

The disordered stretch occupies residues 67-210 (LPAAPEAPGD…QPSPKNPTKS (144 aa)). Residues 121-130 (RPQETQEGHR) are compositionally biased toward basic and acidic residues. Residues 181–190 (AAQAAAAATA) are compositionally biased toward low complexity. Positions 191 to 200 (NPGSQTQTPL) are enriched in polar residues.

This is an uncharacterized protein from Homo sapiens (Human).